A 99-amino-acid chain; its full sequence is Aspartyl/glutamyl-tRNA(Asn/Gln) amidotransferase subunit C (99 aa).

Belongs to the GatC family. As to quaternary structure, heterotrimer of A, B and C subunits.

It carries out the reaction L-glutamyl-tRNA(Gln) + L-glutamine + ATP + H2O = L-glutaminyl-tRNA(Gln) + L-glutamate + ADP + phosphate + H(+). The catalysed reaction is L-aspartyl-tRNA(Asn) + L-glutamine + ATP + H2O = L-asparaginyl-tRNA(Asn) + L-glutamate + ADP + phosphate + 2 H(+). Functionally, allows the formation of correctly charged Asn-tRNA(Asn) or Gln-tRNA(Gln) through the transamidation of misacylated Asp-tRNA(Asn) or Glu-tRNA(Gln) in organisms which lack either or both of asparaginyl-tRNA or glutaminyl-tRNA synthetases. The reaction takes place in the presence of glutamine and ATP through an activated phospho-Asp-tRNA(Asn) or phospho-Glu-tRNA(Gln). The sequence is that of Aspartyl/glutamyl-tRNA(Asn/Gln) amidotransferase subunit C from Paraburkholderia phymatum (strain DSM 17167 / CIP 108236 / LMG 21445 / STM815) (Burkholderia phymatum).